The sequence spans 172 residues: Bifunctional protein PyrR (172 aa).

The short motif at 90–102 (LVLIDDVLMSGRT) is the PRPP-binding element.

It belongs to the purine/pyrimidine phosphoribosyltransferase family. PyrR subfamily.

The catalysed reaction is UMP + diphosphate = 5-phospho-alpha-D-ribose 1-diphosphate + uracil. Functionally, regulates the transcription of the pyrimidine nucleotide (pyr) operon in response to exogenous pyrimidines. In terms of biological role, also displays a weak uracil phosphoribosyltransferase activity which is not physiologically significant. The polypeptide is Bifunctional protein PyrR (Pseudomonas putida (strain W619)).